A 213-amino-acid chain; its full sequence is Octanoyltransferase (213 aa).

One can recognise a BPL/LPL catalytic domain in the interval 32–207 (ESTLDEIWLV…NILALLNNPD (176 aa)). Substrate contacts are provided by residues 71 to 78 (RGGQVTYH), 138 to 140 (SLG), and 151 to 153 (GLA). Cysteine 169 (acyl-thioester intermediate) is an active-site residue.

Belongs to the LipB family.

Its subcellular location is the cytoplasm. It carries out the reaction octanoyl-[ACP] + L-lysyl-[protein] = N(6)-octanoyl-L-lysyl-[protein] + holo-[ACP] + H(+). It participates in protein modification; protein lipoylation via endogenous pathway; protein N(6)-(lipoyl)lysine from octanoyl-[acyl-carrier-protein]: step 1/2. In terms of biological role, catalyzes the transfer of endogenously produced octanoic acid from octanoyl-acyl-carrier-protein onto the lipoyl domains of lipoate-dependent enzymes. Lipoyl-ACP can also act as a substrate although octanoyl-ACP is likely to be the physiological substrate. This is Octanoyltransferase from Escherichia coli O17:K52:H18 (strain UMN026 / ExPEC).